The chain runs to 79 residues: Acyl carrier protein (79 aa).

The 76-residue stretch at 2–77 folds into the Carrier domain; sequence SDVAERVKKI…DAIDFIKANA (76 aa). Ser-37 carries the post-translational modification O-(pantetheine 4'-phosphoryl)serine.

Belongs to the acyl carrier protein (ACP) family. 4'-phosphopantetheine is transferred from CoA to a specific serine of apo-ACP by AcpS. This modification is essential for activity because fatty acids are bound in thioester linkage to the sulfhydryl of the prosthetic group.

It is found in the cytoplasm. It participates in lipid metabolism; fatty acid biosynthesis. Carrier of the growing fatty acid chain in fatty acid biosynthesis. This Azospirillum brasilense protein is Acyl carrier protein.